Consider the following 282-residue polypeptide: Hydrogenase expression/formation protein HoxQ (282 aa).

Belongs to the HupH/HyaF family.

The polypeptide is Hydrogenase expression/formation protein HoxQ (hoxQ) (Cupriavidus necator (strain ATCC 17699 / DSM 428 / KCTC 22496 / NCIMB 10442 / H16 / Stanier 337) (Ralstonia eutropha)).